We begin with the raw amino-acid sequence, 380 residues long: MSSLAADQRADGRIDFVGSVRPTVGVEWEFALVDATTRDLSNEAASVIAEIGENPRVHKELLRNTVEVVTGICANAGEAMEDLASTLRPVREVVRERGMDLFCAGTHPFADWSVQKLTDAPRYAELIKRTQWWGRQMLIWGVHVHVGVSSAHKVMPIITALLHQYPHLLALSASSPYWDGEDTGYASNRAMMFQQLPTAGLPFHFQEWREFERFVSDQKKTGIIDHMNEIRWDIRPSPHLGTIEVRIFDGVSNLHELSALVALTHCLIVDLDRRLDAGESLPVMPPWHVQENKWRAARYGLDAIIILDADSNERLVTEDLDDLLERLQPVAKRLSCVEELSRVPDIYHNGASYQRQRRVAEEHDGDLRAVVDALVSELVL.

This sequence belongs to the glutamate--cysteine ligase type 2 family. YbdK subfamily.

The catalysed reaction is L-cysteine + L-glutamate + ATP = gamma-L-glutamyl-L-cysteine + ADP + phosphate + H(+). ATP-dependent carboxylate-amine ligase which exhibits weak glutamate--cysteine ligase activity. The polypeptide is Putative glutamate--cysteine ligase 2-1 (Mycolicibacterium vanbaalenii (strain DSM 7251 / JCM 13017 / BCRC 16820 / KCTC 9966 / NRRL B-24157 / PYR-1) (Mycobacterium vanbaalenii)).